A 134-amino-acid chain; its full sequence is Small ribosomal subunit protein uS8c (134 aa).

The protein belongs to the universal ribosomal protein uS8 family. In terms of assembly, part of the 30S ribosomal subunit.

The protein localises to the plastid. It localises to the chloroplast. Functionally, one of the primary rRNA binding proteins, it binds directly to 16S rRNA central domain where it helps coordinate assembly of the platform of the 30S subunit. The sequence is that of Small ribosomal subunit protein uS8c (rps8) from Capsella bursa-pastoris (Shepherd's purse).